The chain runs to 104 residues: Complex III assembly factor LYRM7 (104 aa).

This sequence belongs to the complex I LYR family. Interacts with UQCRFS1.

The protein resides in the mitochondrion matrix. In terms of biological role, assembly factor required for Rieske Fe-S protein UQCRFS1 incorporation into the cytochrome b-c1 (CIII) complex. Functions as a chaperone, binding to this subunit within the mitochondrial matrix and stabilizing it prior to its translocation and insertion into the late CIII dimeric intermediate within the mitochondrial inner membrane. The protein is Complex III assembly factor LYRM7 (LYRM7) of Danio rerio (Zebrafish).